The following is an 82-amino-acid chain: U16-lycotoxin-Ls1b (82 aa).

Positions 1–22 are cleaved as a signal peptide; it reads MSPKVQALLLLVGLITFLEVHA. Positions 23–34 are excised as a propeptide; that stretch reads EEELSETVESER. Cystine bridges form between C36–C51, C43–C56, C50–C67, and C58–C65.

The protein belongs to the neurotoxin 02 (plectoxin) family. 04 (U16-lycotoxin) subfamily. In terms of tissue distribution, expressed by the venom gland.

The protein resides in the secreted. This chain is U16-lycotoxin-Ls1b, found in Lycosa singoriensis (Wolf spider).